The primary structure comprises 178 residues: Alkyl hydroperoxide reductase AhpD (178 aa).

Cys-131 functions as the Proton donor in the catalytic mechanism. The cysteines at positions 131 and 134 are disulfide-linked. Residue Cys-134 is the Cysteine sulfenic acid (-SOH) intermediate of the active site.

Belongs to the AhpD family. Homotrimer.

The enzyme catalyses N(6)-[(R)-dihydrolipoyl]-L-lysyl-[lipoyl-carrier protein] + a hydroperoxide = N(6)-[(R)-lipoyl]-L-lysyl-[lipoyl-carrier protein] + an alcohol + H2O. Functionally, antioxidant protein with alkyl hydroperoxidase activity. Required for the reduction of the AhpC active site cysteine residues and for the regeneration of the AhpC enzyme activity. This Streptomyces coelicolor (strain ATCC BAA-471 / A3(2) / M145) protein is Alkyl hydroperoxide reductase AhpD.